The chain runs to 244 residues: rRNA adenine N-6-methyltransferase (244 aa).

Residues Asn11, Ile13, Gly38, Glu59, Asp84, and Asn101 each coordinate S-adenosyl-L-methionine.

Belongs to the class I-like SAM-binding methyltransferase superfamily. rRNA adenine N(6)-methyltransferase family.

It carries out the reaction adenosine(2085) in 23S rRNA + 2 S-adenosyl-L-methionine = N(6)-dimethyladenosine(2085) in 23S rRNA + 2 S-adenosyl-L-homocysteine + 2 H(+). Functionally, this protein produces a dimethylation of the adenine residue at position 2085 in 23S rRNA, resulting in reduced affinity between ribosomes and macrolide-lincosamide-streptogramin B antibiotics. The polypeptide is rRNA adenine N-6-methyltransferase (ermC) (Staphylococcus aureus).